The primary structure comprises 64 residues: Large ribosomal subunit protein bL35 (64 aa).

A compositionally biased stretch (basic residues) spans 1–14 (MKNKTHKGTAKRVK). Positions 1 to 30 (MKNKTHKGTAKRVKVTGSGKLVREQANRRH) are disordered. A compositionally biased stretch (basic and acidic residues) spans 21–30 (LVREQANRRH).

Belongs to the bacterial ribosomal protein bL35 family.

This chain is Large ribosomal subunit protein bL35, found in Corynebacterium efficiens (strain DSM 44549 / YS-314 / AJ 12310 / JCM 11189 / NBRC 100395).